The primary structure comprises 674 residues: Tripartite terminase subunit 3 (674 aa).

The Walker A motif signature appears at V212–T219. Positions L305–E310 match the Walker B motif motif. E310 serves as the catalytic For ATPase activity. Active-site for nuclease activity residues include D463 and E534. Positions G580–K600 are required for interaction with UL56 and DNA packaging. D651 functions as the For nuclease activity in the catalytic mechanism.

This sequence belongs to the herpesviridae TRM3 protein family. Interacts with the terminase subunits TRM1 and TRM2. Interacts with portal protein.

It localises to the host nucleus. Its function is as follows. Component of the molecular motor that translocates viral genomic DNA in empty capsid during DNA packaging. Forms a tripartite terminase complex together with TRM1 and TRM2 in the host cytoplasm. Once the complex reaches the host nucleus, it interacts with the capsid portal vertex. This portal forms a ring in which genomic DNA is translocated into the capsid. TRM3 carries an RNase H-like nuclease activity that plays an important role for the cleavage of concatemeric viral DNA into unit length genomes. The protein is Tripartite terminase subunit 3 of Homo sapiens (Human).